We begin with the raw amino-acid sequence, 1576 residues long: Disco-interacting protein 2 homolog B (1576 aa).

Phosphoserine occurs at positions 9, 50, and 53. The DMAP1-binding domain occupies 12–131 (AVAALPPEVR…PMPTKRRSTF (120 aa)). The interval 31 to 167 (LSEGDITQKG…AALSAALQQS (137 aa)) is disordered. Polar residues predominate over residues 52–62 (YSPQTQETDSA). Residues 70–83 (QTPAPSAAQTSAPS) show a composition bias toward low complexity. Thr71 carries the phosphothreonine modification. Positions 92–104 (GARDERYRSDIHT) are enriched in basic and acidic residues. Ser100 is subject to Phosphoserine. Phosphothreonine is present on Thr140. Phosphoserine is present on residues Ser146, Ser148, and Ser153. The span at 155–167 (RRQAALSAALQQS) shows a compositional bias: low complexity. Ser178, Ser193, and Ser203 each carry phosphoserine. The disordered stretch occupies residues 179–201 (IQGSSTSSSASSTLSHGEVKGTS). A compositionally biased stretch (low complexity) spans 182-193 (SSTSSSASSTLS). A disordered region spans residues 217 to 246 (SAPPDVTTTTSSSSSSSSIRPANIDLPPSG). Over residues 223–234 (TTTTSSSSSSSS) the composition is skewed to low complexity. Ser259 is subject to Phosphoserine.

This sequence belongs to the DIP2 family. As to quaternary structure, interacts with alpha-tubulin. Moderately expressed in adult brain, placenta, skeletal muscle, heart, kidney, pancreas, lung, spleen and colon. Expression was weaker in adult liver, kidney, spleen, and ovary, and in fetal brain and liver. In the brain, it is expressed in the cerebral cortex; the frontal, parietal, occipital and temporal lobes; the paracentral gyrus; the pons; the corpus callosum and the hippocampus. Highest expression levels in the brain were found in the cerebral cortex and the frontal and parietal lobes.

Its subcellular location is the cell projection. The protein localises to the dendrite. The protein resides in the axon. It is found in the perikaryon. Its function is as follows. Negatively regulates axonal outgrowth and is essential for normal synaptic transmission. Not required for regulation of axon polarity. Promotes acetylation of alpha-tubulin. In Homo sapiens (Human), this protein is Disco-interacting protein 2 homolog B (DIP2B).